Here is a 263-residue protein sequence, read N- to C-terminus: Polyglutamine-binding protein 1 (263 aa).

The region spanning 46–80 (EGLPPSWYKVFDPSCGLPYYWNVETDLVSWLSPHD) is the WW domain. The segment at 94 to 263 (NSNADAEDKS…AEASRSKQQD (170 aa)) is disordered. Over residues 99 to 173 (AEDKSERNLE…DKADREDGKD (75 aa)) the composition is skewed to basic and acidic residues. One copy of the 1-1; approximate repeat lies at 104–110 (ERNLEKV). Residues 104 to 138 (ERNLEKVDRNHEKSDRSHEKPDRSHEKADRNHEKS) are 5 X 7 AA approximate tandem repeats of D-R-[NS]-H-E-K-S. The 1-2 repeat unit spans residues 111–117 (DRNHEKS). A 1-3; approximate repeat occupies 118–124 (DRSHEKP). The stretch at 125 to 131 (DRSHEKA) is one 1-4; approximate repeat. Tandem repeats lie at residues 132-138 (DRNHEKS), 139-140 (DR), 141-142 (ER), 143-144 (ER), 150-151 (DR), 152-153 (ER), 154-155 (DR), 156-157 (DR), 158-159 (ER), and 160-161 (ER). Positions 139–144 (DRERER) are 3 X 2 AA tandem repeats of [DE]-R. The segment at 150-161 (DRERDRDRERER) is 6 X 2 AA tandem repeats of [DE]-R. Residues 243–253 (YPSPGAVLRAN) are important for interaction with TXNL4A. The residue at position 245 (Ser245) is a Phosphoserine.

As to quaternary structure, interacts with POU3F2/Brn-2, ATXN1, TXNL4A, HTT and AR. Interaction with ATXN1 correlates positively with the length of the polyglutamine tract. Interacts with RNA polymerase II large subunit in a phosphorylation-dependent manner. Forms a ternary complex with ATXN1 mutant and phosphorylated RNA polymerase II. Interacts (via C-terminus) with TXNL4A and CD2BP2. Interacts (via WW domain) with ATN1 and SF3B1, and may interact with additional splice factors. Interacts (via WW domain) with WBP11; Leading to reduce interaction between PQBP1 and TXNL4A. Interacts with CAPRIN1. Interacts with DDX1. Interacts with SFPQ. Interacts with KHSRP.

Its subcellular location is the nucleus. It is found in the nucleus speckle. The protein localises to the cytoplasmic granule. Its function is as follows. Intrinsically disordered protein that acts as a scaffold, and which is involved in different processes, such as pre-mRNA splicing, transcription regulation, innate immunity and neuron development. Interacts with splicing-related factors via the intrinsically disordered region and regulates alternative splicing of target pre-mRNA species. May suppress the ability of POU3F2 to transactivate the DRD1 gene in a POU3F2 dependent manner. Can activate transcription directly or via association with the transcription machinery. May be involved in ATXN1 mutant-induced cell death. The interaction with ATXN1 mutant reduces levels of phosphorylated RNA polymerase II large subunit. Involved in the assembly of cytoplasmic stress granule, possibly by participating in the transport of neuronal RNA granules. Also acts as an innate immune sensor of infection by retroviruses, by detecting the presence of reverse-transcribed DNA in the cytosol. Directly binds retroviral reverse-transcribed DNA in the cytosol and interacts with CGAS, leading to activate the cGAS-STING signaling pathway, triggering type-I interferon production. This is Polyglutamine-binding protein 1 (Pqbp1) from Rattus norvegicus (Rat).